The following is a 434-amino-acid chain: Methylenetetrahydrofolate--tRNA-(uracil-5-)-methyltransferase TrmFO (434 aa).

9 to 14 (GGGLAG) lines the FAD pocket.

Belongs to the MnmG family. TrmFO subfamily. It depends on FAD as a cofactor.

Its subcellular location is the cytoplasm. It catalyses the reaction uridine(54) in tRNA + (6R)-5,10-methylene-5,6,7,8-tetrahydrofolate + NADH + H(+) = 5-methyluridine(54) in tRNA + (6S)-5,6,7,8-tetrahydrofolate + NAD(+). It carries out the reaction uridine(54) in tRNA + (6R)-5,10-methylene-5,6,7,8-tetrahydrofolate + NADPH + H(+) = 5-methyluridine(54) in tRNA + (6S)-5,6,7,8-tetrahydrofolate + NADP(+). Its function is as follows. Catalyzes the folate-dependent formation of 5-methyl-uridine at position 54 (M-5-U54) in all tRNAs. The protein is Methylenetetrahydrofolate--tRNA-(uracil-5-)-methyltransferase TrmFO of Geobacter sulfurreducens (strain ATCC 51573 / DSM 12127 / PCA).